A 290-amino-acid chain; its full sequence is HTH-type transcriptional activator RhaR (290 aa).

An HTH araC/xylS-type domain is found at 179-277 (DLIMSALQQS…GMTPRDYRQR (99 aa)). 2 DNA-binding regions (H-T-H motif) span residues 196 to 217 (ADFC…RQQT) and 244 to 267 (ISDI…TREA).

As to quaternary structure, binds DNA as a dimer.

The protein localises to the cytoplasm. Activates expression of the rhaSR operon in response to L-rhamnose. The chain is HTH-type transcriptional activator RhaR from Yersinia pseudotuberculosis serotype O:1b (strain IP 31758).